Consider the following 601-residue polypeptide: Putative ankyrin repeat protein R841 (601 aa).

ANK repeat units lie at residues 17–50, 54–86, 91–123, 165–197, 201–234, 238–269, 274–310, 314–349, 361–390, 397–427, 432–463, and 467–500; these read NNIT…DVNA, HGKS…DVNH, QRSV…NINY, RENI…NIDH, YGQT…NINS, KGWS…EINS, NETM…SIDN, KGYT…NINS, VCCD…DVNS, TILM…NPNI, YHKF…DPNI, and IGNN…SYNC.

In Acanthamoeba polyphaga mimivirus (APMV), this protein is Putative ankyrin repeat protein R841.